The primary structure comprises 371 residues: Bifunctional enzyme IspD/IspF (371 aa).

The segment at 1–210 (MLDISLIMLS…LNLPKPSWDI (210 aa)) is 2-C-methyl-D-erythritol 4-phosphate cytidylyltransferase. A 2-C-methyl-D-erythritol 2,4-cyclodiphosphate synthase region spans residues 211–371 (FNGNGFDVHE…NLKYFDWMKL (161 aa)). Residues aspartate 217 and histidine 219 each contribute to the a divalent metal cation site. Residues 217–219 (DVH) and 243–244 (HS) contribute to the 4-CDP-2-C-methyl-D-erythritol 2-phosphate site. Histidine 251 is a binding site for a divalent metal cation. Residues 265-267 (DIG), 270-274 (FPDND), 341-344 (TTTE), phenylalanine 348, and arginine 351 each bind 4-CDP-2-C-methyl-D-erythritol 2-phosphate.

In the N-terminal section; belongs to the IspD/TarI cytidylyltransferase family. IspD subfamily. It in the C-terminal section; belongs to the IspF family. It depends on a divalent metal cation as a cofactor.

It catalyses the reaction 2-C-methyl-D-erythritol 4-phosphate + CTP + H(+) = 4-CDP-2-C-methyl-D-erythritol + diphosphate. The catalysed reaction is 4-CDP-2-C-methyl-D-erythritol 2-phosphate = 2-C-methyl-D-erythritol 2,4-cyclic diphosphate + CMP. Its pathway is isoprenoid biosynthesis; isopentenyl diphosphate biosynthesis via DXP pathway; isopentenyl diphosphate from 1-deoxy-D-xylulose 5-phosphate: step 2/6. It participates in isoprenoid biosynthesis; isopentenyl diphosphate biosynthesis via DXP pathway; isopentenyl diphosphate from 1-deoxy-D-xylulose 5-phosphate: step 4/6. Its function is as follows. Bifunctional enzyme that catalyzes the formation of 4-diphosphocytidyl-2-C-methyl-D-erythritol from CTP and 2-C-methyl-D-erythritol 4-phosphate (MEP) (IspD), and catalyzes the conversion of 4-diphosphocytidyl-2-C-methyl-D-erythritol 2-phosphate (CDP-ME2P) to 2-C-methyl-D-erythritol 2,4-cyclodiphosphate (ME-CPP) with a corresponding release of cytidine 5-monophosphate (CMP) (IspF). This is Bifunctional enzyme IspD/IspF from Campylobacter lari (strain RM2100 / D67 / ATCC BAA-1060).